Here is a 104-residue protein sequence, read N- to C-terminus: Large ribosomal subunit protein uL24 (104 aa).

It belongs to the universal ribosomal protein uL24 family. Part of the 50S ribosomal subunit.

One of two assembly initiator proteins, it binds directly to the 5'-end of the 23S rRNA, where it nucleates assembly of the 50S subunit. Its function is as follows. One of the proteins that surrounds the polypeptide exit tunnel on the outside of the subunit. This Pectobacterium carotovorum subsp. carotovorum (strain PC1) protein is Large ribosomal subunit protein uL24.